The following is a 199-amino-acid chain: Carbon disulfide hydrolase (199 aa).

Cysteine 36, histidine 91, and cysteine 94 together coordinate Zn(2+).

Belongs to the beta-class carbonic anhydrase family. Exists as both octamers and hexadecamers in solution. The hexadecameric homooligomer may form a catenane, through interactions of two interlocked octameric rings. It depends on Zn(2+) as a cofactor.

It carries out the reaction carbon disulfide + 2 H2O = 2 hydrogen sulfide + CO2 + 2 H(+). It functions in the pathway sulfur metabolism; hydrogen sulfide biosynthesis. In terms of biological role, catalyzes the conversion of carbon disulfide into hydrogen sulfide and carbon dioxide, with carbonyl sulfide as an intermediate. Likely plays a key role in sulfur metabolism that allows A.thiooxidans G8 to grow on carbon disulfide as the main carbon and energy source. Does not show carbonic anhydrase activity (hydration of CO(2) to carbonate). This is Carbon disulfide hydrolase from Acidithiobacillus thiooxidans (Thiobacillus thiooxidans).